A 276-amino-acid chain; its full sequence is MSSTVELASSFIEGAPPGEALTSDGSDIIPSLAPAFERYNEKQLTTVKLPGASQEVIVSEFNKIEGNRYFDVESQTSFGVDHVTQQASGAQSYVLESQNADLIHVEVHSRSNQCSKSLLKSLAKHAAEHYPNCSYGVYPTEDDTAVAILLVANRYSPNNFWNGRFRSIYRVPVSESTTVSGKILVDVHYYEDGNVALNTNKPINIAIPSISAESIISRIAAAERDYQEELNRAFVQMAEGAFKNLRRQLPITRQKVEWEKVGGYRLGQDISGGKGR.

It belongs to the F-actin-capping protein alpha subunit family. In terms of assembly, heterodimer of an alpha and a beta subunit.

The protein resides in the cytoplasm. It is found in the cytoskeleton. Its function is as follows. F-actin-capping proteins bind in a Ca(2+)-independent manner to the fast growing ends of actin filaments (barbed end) thereby blocking the exchange of subunits at these ends. Unlike other capping proteins (such as gelsolin and severin), these proteins do not sever actin filaments. The protein is F-actin-capping protein subunit alpha (cap1) of Aspergillus fumigatus (strain ATCC MYA-4609 / CBS 101355 / FGSC A1100 / Af293) (Neosartorya fumigata).